Consider the following 314-residue polypeptide: 4-hydroxy-3-methylbut-2-enyl diphosphate reductase (314 aa).

A [4Fe-4S] cluster-binding site is contributed by Cys-12. His-43 and His-81 together coordinate (2E)-4-hydroxy-3-methylbut-2-enyl diphosphate. Dimethylallyl diphosphate-binding residues include His-43 and His-81. His-43 and His-81 together coordinate isopentenyl diphosphate. Cys-103 lines the [4Fe-4S] cluster pocket. His-131 lines the (2E)-4-hydroxy-3-methylbut-2-enyl diphosphate pocket. Position 131 (His-131) interacts with dimethylallyl diphosphate. Residue His-131 participates in isopentenyl diphosphate binding. Catalysis depends on Glu-133, which acts as the Proton donor. Thr-170 contributes to the (2E)-4-hydroxy-3-methylbut-2-enyl diphosphate binding site. Cys-198 contacts [4Fe-4S] cluster. Positions 226, 228, and 271 each coordinate (2E)-4-hydroxy-3-methylbut-2-enyl diphosphate. The dimethylallyl diphosphate site is built by Ser-226, Asn-228, and Ser-271. The isopentenyl diphosphate site is built by Ser-226, Asn-228, and Ser-271.

The protein belongs to the IspH family. Requires [4Fe-4S] cluster as cofactor.

The catalysed reaction is isopentenyl diphosphate + 2 oxidized [2Fe-2S]-[ferredoxin] + H2O = (2E)-4-hydroxy-3-methylbut-2-enyl diphosphate + 2 reduced [2Fe-2S]-[ferredoxin] + 2 H(+). It carries out the reaction dimethylallyl diphosphate + 2 oxidized [2Fe-2S]-[ferredoxin] + H2O = (2E)-4-hydroxy-3-methylbut-2-enyl diphosphate + 2 reduced [2Fe-2S]-[ferredoxin] + 2 H(+). It functions in the pathway isoprenoid biosynthesis; dimethylallyl diphosphate biosynthesis; dimethylallyl diphosphate from (2E)-4-hydroxy-3-methylbutenyl diphosphate: step 1/1. It participates in isoprenoid biosynthesis; isopentenyl diphosphate biosynthesis via DXP pathway; isopentenyl diphosphate from 1-deoxy-D-xylulose 5-phosphate: step 6/6. Functionally, catalyzes the conversion of 1-hydroxy-2-methyl-2-(E)-butenyl 4-diphosphate (HMBPP) into a mixture of isopentenyl diphosphate (IPP) and dimethylallyl diphosphate (DMAPP). Acts in the terminal step of the DOXP/MEP pathway for isoprenoid precursor biosynthesis. In Halalkalibacterium halodurans (strain ATCC BAA-125 / DSM 18197 / FERM 7344 / JCM 9153 / C-125) (Bacillus halodurans), this protein is 4-hydroxy-3-methylbut-2-enyl diphosphate reductase.